The primary structure comprises 848 residues: Alanine--tRNA ligase (848 aa).

Positions 553, 557, 654, and 658 each coordinate Zn(2+).

It belongs to the class-II aminoacyl-tRNA synthetase family. Zn(2+) serves as cofactor.

The protein resides in the cytoplasm. The catalysed reaction is tRNA(Ala) + L-alanine + ATP = L-alanyl-tRNA(Ala) + AMP + diphosphate. Functionally, catalyzes the attachment of alanine to tRNA(Ala) in a two-step reaction: alanine is first activated by ATP to form Ala-AMP and then transferred to the acceptor end of tRNA(Ala). Also edits incorrectly charged Ser-tRNA(Ala) and Gly-tRNA(Ala) via its editing domain. This is Alanine--tRNA ligase from Neorickettsia sennetsu (strain ATCC VR-367 / Miyayama) (Ehrlichia sennetsu).